We begin with the raw amino-acid sequence, 130 residues long: Riboflavin kinase (130 aa).

Residue 10 to 15 (GFGEGK) coordinates CDP. The Mg(2+) site is built by T39 and N41. T96 and E104 together coordinate FMN. Residue 109-112 (VNLR) coordinates CDP.

Belongs to the archaeal riboflavin kinase family. The cofactor is Mg(2+).

It carries out the reaction riboflavin + CTP = CDP + FMN + H(+). The protein operates within cofactor biosynthesis; FMN biosynthesis; FMN from riboflavin (CTP route): step 1/1. Functionally, catalyzes the CTP-dependent phosphorylation of riboflavin (vitamin B2) to form flavin mononucleotide (FMN). The protein is Riboflavin kinase of Methanococcus vannielii (strain ATCC 35089 / DSM 1224 / JCM 13029 / OCM 148 / SB).